We begin with the raw amino-acid sequence, 255 residues long: MSKEFLPTILEQKEQEVEAMSYEELQPLRSTYSLYEYLKSQSQELQLIAEVKKASPSLGDINLAVDIVEQARTYERCGAAMISVLTDEIFFKGHLDYLREISSQVSIPTLNKDFIIDEKQIVRARNAGATIILLIVAALSEKRLQELYDFATGLGLEVLVETHNLAELETAHRIGARIIGVNNRNLVTFETDINTSLQLSAHFKDDRVYVSESAIFSKEDAEQVAPYFHAILVGTALMQAEDVAEKIKELKIDKG.

It belongs to the TrpC family.

The catalysed reaction is 1-(2-carboxyphenylamino)-1-deoxy-D-ribulose 5-phosphate + H(+) = (1S,2R)-1-C-(indol-3-yl)glycerol 3-phosphate + CO2 + H2O. It participates in amino-acid biosynthesis; L-tryptophan biosynthesis; L-tryptophan from chorismate: step 4/5. The sequence is that of Indole-3-glycerol phosphate synthase from Streptococcus gordonii (strain Challis / ATCC 35105 / BCRC 15272 / CH1 / DL1 / V288).